The chain runs to 708 residues: Leukotoxin translocation ATP-binding protein LktB (708 aa).

The Peptidase C39 domain maps to 1-126 (MEANHQRNDL…ACYQGQLILV (126 aa)). The ABC transmembrane type-1 domain occupies 155–437 (FLETLIVSIF…LAQLWQDFQQ (283 aa)). 5 consecutive transmembrane segments (helical) span residues 159–179 (LIVS…FQVV), 192–212 (LNII…LSGL), 270–290 (ALTS…MWYY), 296–316 (LVIL…SPIL), and 389–409 (VMVI…LSIG). The ABC transporter domain maps to 469-704 (ISFKNIRFRY…SNGLYSYLHQ (236 aa)). 503–510 (GRSGSGKS) is a binding site for ATP.

Belongs to the ABC transporter superfamily. Protein-1 exporter (TC 3.A.1.109) family. Homodimer.

The protein localises to the cell inner membrane. The catalysed reaction is ATP + H2O + proteinSide 1 = ADP + phosphate + proteinSide 2.. Part of the ABC transporter complex LktBD involved in leukotoxin export. Transmembrane domains (TMD) form a pore in the inner membrane and the ATP-binding domain (NBD) is responsible for energy generation. The protein is Leukotoxin translocation ATP-binding protein LktB (lktB) of Mannheimia haemolytica (Pasteurella haemolytica).